The primary structure comprises 809 residues: BTB/POZ domain-containing protein At2g30600 (809 aa).

2 consecutive BTB domains span residues 211–273 (SDTV…QILE) and 351–420 (SDIK…NMED). Positions 466-537 (VVSSISSCKL…LMWCMKAEES (72 aa)) constitute a BACK domain.

The protein operates within protein modification; protein ubiquitination. Functionally, may act as a substrate-specific adapter of an E3 ubiquitin-protein ligase complex (CUL3-RBX1-BTB) which mediates the ubiquitination and subsequent proteasomal degradation of target proteins. The protein is BTB/POZ domain-containing protein At2g30600 of Arabidopsis thaliana (Mouse-ear cress).